The following is a 129-amino-acid chain: Small ribosomal subunit protein uS9 (129 aa).

Belongs to the universal ribosomal protein uS9 family.

This chain is Small ribosomal subunit protein uS9, found in Gemmatimonas aurantiaca (strain DSM 14586 / JCM 11422 / NBRC 100505 / T-27).